Reading from the N-terminus, the 172-residue chain is Transcriptional repressor NrdR (172 aa).

A zinc finger spans residues 3–34 (CPFCRHPDSRVVDSRTTDDGTSIRRRRQCPDC). The 91-residue stretch at 46–136 (LMVIKRSGVT…VYRAFDSLED (91 aa)) folds into the ATP-cone domain. The interval 152–172 (ERSGGGTCGTGTVPVPAGTAD) is disordered. Residues 161–172 (TGTVPVPAGTAD) are compositionally biased toward low complexity.

Belongs to the NrdR family. It depends on Zn(2+) as a cofactor.

In terms of biological role, negatively regulates transcription of bacterial ribonucleotide reductase nrd genes and operons by binding to NrdR-boxes. The protein is Transcriptional repressor NrdR of Streptomyces clavuligerus.